Reading from the N-terminus, the 960-residue chain is Testis anion transporter 1 (960 aa).

Residues 1–93 are Cytoplasmic-facing; that stretch reads MQPDRSFQSF…YRFKDWLLGD (93 aa). The chain crosses the membrane as a helical span at residues 94 to 114; that stretch reads LLAGISVGLVQIPQVLMLGLL. The Extracellular segment spans residues 115–117; sequence ARH. Residues 118–138 traverse the membrane as a helical segment; that stretch reads LIPPLNVSYAAFCASVIYGIF. Residue Gly139 is a topological domain, cytoplasmic. The helical transmembrane segment at 140–160 threads the bilayer; the sequence is SCHQMSIGTFFLVSALAINVL. Residues 161–201 lie on the Extracellular side of the membrane; the sequence is RTQPFNRGHLLLGTFIQADFSNTSFYENYNRSLSSVASVTL. N-linked (GlcNAc...) asparagine glycosylation occurs at Asn190. Transmembrane regions (helical) follow at residues 202 to 222 and 223 to 243; these read LTGI…VAYI and PEAA…LSQL. The Cytoplasmic segment spans residues 244–268; the sequence is TCIFGIMISYNSGPIAFFYNIINYC. A helical transmembrane segment spans residues 269–289; the sequence is LGLPKANSTSILLFLTAMVAL. Topologically, residues 290–353 are extracellular; the sequence is RINKCIRISF…PVTPDMSNLT (64 aa). The chain crosses the membrane as a helical span at residues 354–374; it reads EVLIESFSLALVSSSLLVFLG. Residues 375–390 are Cytoplasmic-facing; it reads KKIASFHNYDVNSNQD. A helical transmembrane segment spans residues 391-411; that stretch reads LIAIGLCNVVSSFFRSYVFTG. The Extracellular portion of the chain corresponds to 412–427; that stretch reads AVARTIIQDKTGGRQQ. The helical transmembrane segment at 428–448 threads the bilayer; sequence FASLVGAGIMLLLMMKMARFF. The Cytoplasmic segment spans residues 449–453; sequence YRLPN. A helical membrane pass occupies residues 454–474; sequence AIVAGIILSNVLPYLEAVYTL. At 475 to 494 the chain is on the extracellular side; that stretch reads PSLWRQNQYDCLIWMVTFMS. The chain crosses the membrane as a helical span at residues 495-515; that stretch reads AILLGLDIGLVVAVTFAFFII. The Cytoplasmic segment spans residues 516-960; that stretch reads TVQSHRTKIL…ADTSEDALEI (445 aa). The region spanning 541–792 is the STAS domain; sequence DYREVANIPG…LTLHDAVLFA (252 aa). Residues 662–957 form an interaction with RACGAP1 region; that stretch reads ITSSSSQRNP…TSKADTSEDA (296 aa). Disordered regions lie at residues 807-857 and 881-960; these read ESET…EESD and EVEP…ALEI. The span at 818–827 shows a compositional bias: basic and acidic residues; sequence ETDKKEESRH. The segment covering 884–904 has biased composition (acidic residues); sequence PESELEPESELDQETELEPEP. Residues 926-935 are compositionally biased toward polar residues; it reads SPTQTQARTQ.

This sequence belongs to the SLC26A/SulP transporter (TC 2.A.53) family. As to quaternary structure, interacts with RACGAP1. Interacts with CFTR; stimulates anion transport activity of CFTR. N-glycosylated.

It localises to the membrane. It carries out the reaction sulfate(out) + chloride(in) = sulfate(in) + chloride(out). The catalysed reaction is oxalate(in) + chloride(out) = oxalate(out) + chloride(in). Functionally, antiporter that mediates the exchange of sulfate and oxalate against chloride ions across a membrane. Stimulates anion transport activity of CFTR. May cooperate with CFTR in the regulation of chloride and bicarbonate ions fluxes required for activation of the ADCY10/PKA pathway during sperm motility and sperm capacitation. May play a role in sperm tail differentiation and motility and hence male fertility. The protein is Testis anion transporter 1 of Bos taurus (Bovine).